The chain runs to 216 residues: Adenylate kinase (216 aa).

10-15 (GAGKGT) is a binding site for ATP. The interval 30 to 59 (STGDMLRAAVKAGTELGIKAKSIMDAGGLV) is NMP. AMP is bound by residues threonine 31, arginine 36, 57 to 59 (GLV), 85 to 88 (GFPR), and glutamine 92. Residues 122–159 (GRRVHEASGRVYHIVYNPPKIAGKDDITGEELVQRKDD) form an LID region. ATP is bound by residues arginine 123 and 132–133 (VY). The AMP site is built by arginine 156 and arginine 167. Residue glycine 202 coordinates ATP.

The protein belongs to the adenylate kinase family. In terms of assembly, monomer.

It is found in the cytoplasm. The catalysed reaction is AMP + ATP = 2 ADP. The protein operates within purine metabolism; AMP biosynthesis via salvage pathway; AMP from ADP: step 1/1. Catalyzes the reversible transfer of the terminal phosphate group between ATP and AMP. Plays an important role in cellular energy homeostasis and in adenine nucleotide metabolism. This chain is Adenylate kinase, found in Pseudomonas fluorescens (strain Pf0-1).